The sequence spans 161 residues: Extracellular giant hemoglobin major globin subunit B1 (161 aa).

A signal peptide spans 1 to 16; that stretch reads MTILVLFLSCAALASA. The Globin domain occupies 18 to 161; that stretch reads CCSRGDAEVV…YIAAGIGAGL (144 aa). An intrachain disulfide couples Cys-19 to Cys-149. His-112 serves as a coordination point for heme b.

Belongs to the globin family. In terms of assembly, the 400 kDa hemoglobin consists of a spherical 24-mer arranged as a double layer of dome-shaped dodecamers. Each dodecamer is composed of the 3-fold trimer of the tetramer A1-A2-B1-B2 having one intra-tetramer (A1-B2) disulfide bond and one inter-tetramer (B1-B2) disulfide bond per tetramer.

It localises to the secreted. In terms of biological role, the extracellular giant hemoglobin is able to bind and transport oxygen and sulfide simultaneously and reversibly at two different sites. In Oligobrachia mashikoi (Beard worm), this protein is Extracellular giant hemoglobin major globin subunit B1 (ghbB1).